We begin with the raw amino-acid sequence, 262 residues long: Glutamate racemase (262 aa).

Residues 7 to 8 (DS) and 39 to 40 (YG) contribute to the substrate site. The active-site Proton donor/acceptor is cysteine 70. 71-72 (NT) provides a ligand contact to substrate. Cysteine 182 functions as the Proton donor/acceptor in the catalytic mechanism. 183-184 (TH) is a binding site for substrate.

This sequence belongs to the aspartate/glutamate racemases family.

It carries out the reaction L-glutamate = D-glutamate. The protein operates within cell wall biogenesis; peptidoglycan biosynthesis. In terms of biological role, provides the (R)-glutamate required for cell wall biosynthesis. The chain is Glutamate racemase from Campylobacter concisus (strain 13826).